A 631-amino-acid polypeptide reads, in one-letter code: 1-deoxy-D-xylulose-5-phosphate synthase (631 aa).

Thiamine diphosphate-binding positions include His-74 and 115-117 (GHS). A Mg(2+)-binding site is contributed by Asp-146. Thiamine diphosphate-binding positions include 147–148 (GA), Asn-175, Tyr-286, and Glu-368. Mg(2+) is bound at residue Asn-175.

This sequence belongs to the transketolase family. DXPS subfamily. In terms of assembly, homodimer. Mg(2+) is required as a cofactor. Requires thiamine diphosphate as cofactor.

It carries out the reaction D-glyceraldehyde 3-phosphate + pyruvate + H(+) = 1-deoxy-D-xylulose 5-phosphate + CO2. It participates in metabolic intermediate biosynthesis; 1-deoxy-D-xylulose 5-phosphate biosynthesis; 1-deoxy-D-xylulose 5-phosphate from D-glyceraldehyde 3-phosphate and pyruvate: step 1/1. Catalyzes the acyloin condensation reaction between C atoms 2 and 3 of pyruvate and glyceraldehyde 3-phosphate to yield 1-deoxy-D-xylulose-5-phosphate (DXP). The chain is 1-deoxy-D-xylulose-5-phosphate synthase from Natranaerobius thermophilus (strain ATCC BAA-1301 / DSM 18059 / JW/NM-WN-LF).